The sequence spans 342 residues: Holliday junction branch migration complex subunit RuvB (342 aa).

The segment at 1 to 181 is large ATPase domain (RuvB-L); that stretch reads MEERFLTPKD…FGMVLELEFY (181 aa). Residues leucine 20, arginine 21, glycine 62, lysine 65, threonine 66, threonine 67, 128-130, arginine 171, tyrosine 181, and arginine 218 contribute to the ATP site; that span reads EDF. Residue threonine 66 participates in Mg(2+) binding. Positions 182–252 are small ATPAse domain (RuvB-S); that stretch reads TPDELKQIIK…TVEDAMKIMG (71 aa). Residues 255–342 form a head domain (RuvB-H) region; sequence AEGLDDMDRK…IGPLWDSTGD (88 aa). DNA-binding residues include arginine 310 and arginine 315.

This sequence belongs to the RuvB family. In terms of assembly, homohexamer. Forms an RuvA(8)-RuvB(12)-Holliday junction (HJ) complex. HJ DNA is sandwiched between 2 RuvA tetramers; dsDNA enters through RuvA and exits via RuvB. An RuvB hexamer assembles on each DNA strand where it exits the tetramer. Each RuvB hexamer is contacted by two RuvA subunits (via domain III) on 2 adjacent RuvB subunits; this complex drives branch migration. In the full resolvosome a probable DNA-RuvA(4)-RuvB(12)-RuvC(2) complex forms which resolves the HJ.

The protein localises to the cytoplasm. It carries out the reaction ATP + H2O = ADP + phosphate + H(+). In terms of biological role, the RuvA-RuvB-RuvC complex processes Holliday junction (HJ) DNA during genetic recombination and DNA repair, while the RuvA-RuvB complex plays an important role in the rescue of blocked DNA replication forks via replication fork reversal (RFR). RuvA specifically binds to HJ cruciform DNA, conferring on it an open structure. The RuvB hexamer acts as an ATP-dependent pump, pulling dsDNA into and through the RuvAB complex. RuvB forms 2 homohexamers on either side of HJ DNA bound by 1 or 2 RuvA tetramers; 4 subunits per hexamer contact DNA at a time. Coordinated motions by a converter formed by DNA-disengaged RuvB subunits stimulates ATP hydrolysis and nucleotide exchange. Immobilization of the converter enables RuvB to convert the ATP-contained energy into a lever motion, pulling 2 nucleotides of DNA out of the RuvA tetramer per ATP hydrolyzed, thus driving DNA branch migration. The RuvB motors rotate together with the DNA substrate, which together with the progressing nucleotide cycle form the mechanistic basis for DNA recombination by continuous HJ branch migration. Branch migration allows RuvC to scan DNA until it finds its consensus sequence, where it cleaves and resolves cruciform DNA. This is Holliday junction branch migration complex subunit RuvB from Kosmotoga olearia (strain ATCC BAA-1733 / DSM 21960 / TBF 19.5.1).